Reading from the N-terminus, the 31-residue chain is Cyclotide vico-B (31 aa).

The segment at residues 1–31 is a cross-link (cyclopeptide (Gly-Asn)); it reads GSIPCAESCVYIPCITGIAGCSCKNKVCYYN. Cystine bridges form between cysteine 5–cysteine 21, cysteine 9–cysteine 23, and cysteine 14–cysteine 28.

This sequence belongs to the cyclotide family. Bracelet subfamily. This is a cyclic peptide.

Its function is as follows. Probably participates in a plant defense mechanism. The polypeptide is Cyclotide vico-B (Viola cotyledon (Violeta)).